We begin with the raw amino-acid sequence, 79 residues long: Cytoinsectotoxin-3 (79 aa).

The protein belongs to the cationic peptide 06 (cytoinsectotoxin) family. In terms of tissue distribution, expressed by the venom gland.

The protein localises to the secreted. Functionally, insecticidal and antimicrobial peptide. Has insecticidal activity against larvae of flesh fly S.carnaria. Has antibacterial activity against Gram-positive bacterium B.subtilis B-501 (MIC=0.63 uM) and Gram-negative bacterium E.coli DH5alpha (MIC=2.5 uM). In Lachesana tarabaevi (Spider), this protein is Cytoinsectotoxin-3.